Consider the following 174-residue polypeptide: Austinoid biosynthesis clusters protein H (174 aa).

The protein belongs to the trt14 isomerase family. Homodimer.

It functions in the pathway secondary metabolite biosynthesis; terpenoid biosynthesis. Its function is as follows. Part of the gene cluster B that mediates the biosynthesis of austinol and dehydroaustinol, two fungal meroterpenoids. The first step of the pathway is the synthesis of 3,5-dimethylorsellinic acid by the polyketide synthase ausA. 3,5-dimethylorsellinic acid is then prenylated by the polyprenyl transferase ausN. Further epoxidation by the FAD-dependent monooxygenase ausM and cyclization by the probable terpene cyclase ausL lead to the formation of protoaustinoid A. Protoaustinoid A is then oxidized to spiro-lactone preaustinoid A3 by the combined action of the FAD-binding monooxygenases ausB and ausC, and the dioxygenase ausE. Acid-catalyzed keto-rearrangement and ring contraction of the tetraketide portion of preaustinoid A3 by ausJ lead to the formation of preaustinoid A4. The aldo-keto reductase ausK, with the help of ausH, is involved in the next step by transforming preaustinoid A4 into isoaustinone which is in turn hydroxylated by the P450 monooxygenase ausI to form austinolide. Finally, the cytochrome P450 monooxygenase ausG modifies austinolide to austinol. Austinol can be further modified to dehydroaustinol which forms a diffusible complex with diorcinol that initiates conidiation. Due to genetic rearrangements of the clusters and the subsequent loss of some enzymes, the end products of the Emericella nidulans austinoid biosynthesis clusters are austinol and dehydroaustinol, even if additional enzymes, such as the O-acetyltransferase ausQ and the cytochrome P450 monooxygenase ausR are still functional. The polypeptide is Austinoid biosynthesis clusters protein H (Emericella nidulans (strain FGSC A4 / ATCC 38163 / CBS 112.46 / NRRL 194 / M139) (Aspergillus nidulans)).